We begin with the raw amino-acid sequence, 494 residues long: Glutamate--tRNA ligase (494 aa).

The short motif at 9 to 19 (PSPTGPLHIGS) is the 'HIGH' region element. The 'KMSKS' region signature appears at 249–253 (KLSKR). Lysine 252 contributes to the ATP binding site.

The protein belongs to the class-I aminoacyl-tRNA synthetase family. Glutamate--tRNA ligase type 1 subfamily. As to quaternary structure, monomer.

It is found in the cytoplasm. It catalyses the reaction tRNA(Glu) + L-glutamate + ATP = L-glutamyl-tRNA(Glu) + AMP + diphosphate. Catalyzes the attachment of glutamate to tRNA(Glu) in a two-step reaction: glutamate is first activated by ATP to form Glu-AMP and then transferred to the acceptor end of tRNA(Glu). The polypeptide is Glutamate--tRNA ligase (Azobacteroides pseudotrichonymphae genomovar. CFP2).